The chain runs to 116 residues: Iron-sulfur cluster assembly protein CyaY (116 aa).

The protein belongs to the frataxin family.

Its function is as follows. Involved in iron-sulfur (Fe-S) cluster assembly. May act as a regulator of Fe-S biogenesis. This chain is Iron-sulfur cluster assembly protein CyaY, found in Polaromonas sp. (strain JS666 / ATCC BAA-500).